A 418-amino-acid polypeptide reads, in one-letter code: Actin-related protein 3B (418 aa).

Belongs to the actin family. ARP3 subfamily. In terms of assembly, interacts with the Arp2/3 complex composed of ARP2, ARP3, ARPC1B, ARPC1B/p41-ARC, ARPC2/p34-ARC, ARPC3/p21-ARC, ARPC4/p20-ARC and ARPC5/p16-ARC.

The protein localises to the cytoplasm. Its subcellular location is the cytoskeleton. It is found in the cell projection. Plays a role in the organization of the actin cytoskeleton. May function as ATP-binding component of the Arp2/3 complex which is involved in regulation of actin polymerization and together with an activating nucleation-promoting factor (NPF) mediates the formation of branched actin networks. May decrease the metastatic potential of tumors. The protein is Actin-related protein 3B (Actr3b) of Mus musculus (Mouse).